A 22-amino-acid polypeptide reads, in one-letter code: Bacteriocin serracin-P 23 kDa subunit (22 aa).

In terms of biological role, major component of a prophage tail tube. Functionally, antibacterial activity against Gram-negative bacterium E.amylovora. This chain is Bacteriocin serracin-P 23 kDa subunit, found in Serratia plymuthica.